Here is an 82-residue protein sequence, read N- to C-terminus: Small ribosomal subunit protein bS16c (82 aa).

It belongs to the bacterial ribosomal protein bS16 family.

The protein resides in the plastid. Its subcellular location is the chloroplast. The sequence is that of Small ribosomal subunit protein bS16c from Pyropia yezoensis (Susabi-nori).